Consider the following 218-residue polypeptide: Thiopurine S-methyltransferase (218 aa).

Residues Trp-10, Leu-45, Glu-66, and Arg-123 each contribute to the S-adenosyl-L-methionine site.

This sequence belongs to the class I-like SAM-binding methyltransferase superfamily. TPMT family.

The protein localises to the cytoplasm. The enzyme catalyses S-adenosyl-L-methionine + a thiopurine = S-adenosyl-L-homocysteine + a thiopurine S-methylether.. In Shewanella sp. (strain ANA-3), this protein is Thiopurine S-methyltransferase.